The primary structure comprises 176 residues: NAD(P)H-quinone oxidoreductase subunit 6, chloroplastic (176 aa).

A run of 5 helical transmembrane segments spans residues I10–T30, I33–L53, V60–F80, I95–I115, and F152–T172.

This sequence belongs to the complex I subunit 6 family. As to quaternary structure, NDH is composed of at least 16 different subunits, 5 of which are encoded in the nucleus.

Its subcellular location is the plastid. The protein localises to the chloroplast thylakoid membrane. It catalyses the reaction a plastoquinone + NADH + (n+1) H(+)(in) = a plastoquinol + NAD(+) + n H(+)(out). The enzyme catalyses a plastoquinone + NADPH + (n+1) H(+)(in) = a plastoquinol + NADP(+) + n H(+)(out). Its function is as follows. NDH shuttles electrons from NAD(P)H:plastoquinone, via FMN and iron-sulfur (Fe-S) centers, to quinones in the photosynthetic chain and possibly in a chloroplast respiratory chain. The immediate electron acceptor for the enzyme in this species is believed to be plastoquinone. Couples the redox reaction to proton translocation, and thus conserves the redox energy in a proton gradient. The chain is NAD(P)H-quinone oxidoreductase subunit 6, chloroplastic (ndhG) from Brachypodium distachyon (Purple false brome).